The following is a 296-amino-acid chain: Ribosomal RNA small subunit methyltransferase A (296 aa).

S-adenosyl-L-methionine-binding residues include N32, L34, G59, E80, D105, and N130.

It belongs to the class I-like SAM-binding methyltransferase superfamily. rRNA adenine N(6)-methyltransferase family. RsmA subfamily.

It is found in the cytoplasm. It catalyses the reaction adenosine(1518)/adenosine(1519) in 16S rRNA + 4 S-adenosyl-L-methionine = N(6)-dimethyladenosine(1518)/N(6)-dimethyladenosine(1519) in 16S rRNA + 4 S-adenosyl-L-homocysteine + 4 H(+). In terms of biological role, specifically dimethylates two adjacent adenosines (A1518 and A1519) in the loop of a conserved hairpin near the 3'-end of 16S rRNA in the 30S particle. May play a critical role in biogenesis of 30S subunits. In Lactiplantibacillus plantarum (strain ATCC BAA-793 / NCIMB 8826 / WCFS1) (Lactobacillus plantarum), this protein is Ribosomal RNA small subunit methyltransferase A.